Reading from the N-terminus, the 213-residue chain is Thymidylate kinase (213 aa).

Residue 10–17 (GLEGAGKT) coordinates ATP.

It belongs to the thymidylate kinase family.

It carries out the reaction dTMP + ATP = dTDP + ADP. In terms of biological role, phosphorylation of dTMP to form dTDP in both de novo and salvage pathways of dTTP synthesis. This chain is Thymidylate kinase, found in Escherichia coli O6:K15:H31 (strain 536 / UPEC).